The chain runs to 309 residues: Aspartate carbamoyltransferase catalytic subunit (309 aa).

Residues arginine 54 and threonine 55 each contribute to the carbamoyl phosphate site. Lysine 82 is an L-aspartate binding site. Carbamoyl phosphate contacts are provided by arginine 104, histidine 132, and glutamine 135. Residues arginine 165 and arginine 219 each contribute to the L-aspartate site. Positions 260 and 261 each coordinate carbamoyl phosphate.

This sequence belongs to the aspartate/ornithine carbamoyltransferase superfamily. ATCase family. In terms of assembly, heterododecamer (2C3:3R2) of six catalytic PyrB chains organized as two trimers (C3), and six regulatory PyrI chains organized as three dimers (R2).

The catalysed reaction is carbamoyl phosphate + L-aspartate = N-carbamoyl-L-aspartate + phosphate + H(+). It functions in the pathway pyrimidine metabolism; UMP biosynthesis via de novo pathway; (S)-dihydroorotate from bicarbonate: step 2/3. Functionally, catalyzes the condensation of carbamoyl phosphate and aspartate to form carbamoyl aspartate and inorganic phosphate, the committed step in the de novo pyrimidine nucleotide biosynthesis pathway. The polypeptide is Aspartate carbamoyltransferase catalytic subunit (Parafrankia sp. (strain EAN1pec)).